Here is a 115-residue protein sequence, read N- to C-terminus: Large ribosomal subunit protein uL18 (115 aa).

This sequence belongs to the universal ribosomal protein uL18 family. Part of the 50S ribosomal subunit; part of the 5S rRNA/L5/L18/L25 subcomplex. Contacts the 5S and 23S rRNAs.

Functionally, this is one of the proteins that bind and probably mediate the attachment of the 5S RNA into the large ribosomal subunit, where it forms part of the central protuberance. The polypeptide is Large ribosomal subunit protein uL18 (Mycoplasma genitalium (strain ATCC 33530 / DSM 19775 / NCTC 10195 / G37) (Mycoplasmoides genitalium)).